Here is a 149-residue protein sequence, read N- to C-terminus: Large ribosomal subunit protein uL15A (149 aa).

Residues R21–H40 form a disordered region.

This sequence belongs to the universal ribosomal protein uL15 family. Component of the large ribosomal subunit.

Its subcellular location is the cytoplasm. The protein localises to the cytosol. The protein resides in the endoplasmic reticulum. Its function is as follows. Component of the large ribosomal subunit. The ribosome is a large ribonucleoprotein complex responsible for the synthesis of proteins in the cell. The polypeptide is Large ribosomal subunit protein uL15A (rpl27a-1) (Entamoeba histolytica (strain ATCC 30459 / HM-1:IMSS / ABRM)).